The primary structure comprises 278 residues: 4-deoxy-L-threo-5-hexosulose-uronate ketol-isomerase (278 aa).

Zn(2+)-binding residues include histidine 196, histidine 198, glutamate 203, and histidine 245.

It belongs to the KduI family. In terms of assembly, homohexamer. Zn(2+) serves as cofactor.

It carries out the reaction 5-dehydro-4-deoxy-D-glucuronate = 3-deoxy-D-glycero-2,5-hexodiulosonate. It participates in glycan metabolism; pectin degradation; 2-dehydro-3-deoxy-D-gluconate from pectin: step 4/5. Its function is as follows. Catalyzes the isomerization of 5-dehydro-4-deoxy-D-glucuronate to 3-deoxy-D-glycero-2,5-hexodiulosonate. The chain is 4-deoxy-L-threo-5-hexosulose-uronate ketol-isomerase from Escherichia coli (strain SMS-3-5 / SECEC).